The chain runs to 302 residues: Methionyl-tRNA formyltransferase (302 aa).

108–111 is a (6S)-5,6,7,8-tetrahydrofolate binding site; sequence SILP.

Belongs to the Fmt family.

The catalysed reaction is L-methionyl-tRNA(fMet) + (6R)-10-formyltetrahydrofolate = N-formyl-L-methionyl-tRNA(fMet) + (6S)-5,6,7,8-tetrahydrofolate + H(+). Its function is as follows. Attaches a formyl group to the free amino group of methionyl-tRNA(fMet). The formyl group appears to play a dual role in the initiator identity of N-formylmethionyl-tRNA by promoting its recognition by IF2 and preventing the misappropriation of this tRNA by the elongation apparatus. This chain is Methionyl-tRNA formyltransferase, found in Sulfurimonas denitrificans (strain ATCC 33889 / DSM 1251) (Thiomicrospira denitrificans (strain ATCC 33889 / DSM 1251)).